A 264-amino-acid polypeptide reads, in one-letter code: DNA-binding HTH-type transcriptional repressor TrmBL2 (264 aa).

Residues 81-113 (LEKFIEEWQERVKEELEAKKKAKEELIELMKPL) are a coiled coil.

This sequence belongs to the transcriptional regulator TrmB family.

It localises to the cytoplasm. It is found in the chromosome. In terms of biological role, an abundant chromosomal protein that seems to be involved in both genome architecture and transcription repression. Incubation with DNA in vitro gives fibrous structures 14.2 +/- 2.1 nm in thickness (naked DNA is 1.83 +/- 0.37 nm); does not significantly compact DNA. Binds to both coding and non-coding regions; binding within gene promoters correlates with decreased transcript levels, while binding within coding regions does not. This is DNA-binding HTH-type transcriptional repressor TrmBL2 from Thermococcus kodakarensis (strain ATCC BAA-918 / JCM 12380 / KOD1) (Pyrococcus kodakaraensis (strain KOD1)).